We begin with the raw amino-acid sequence, 356 residues long: MPILKQLVSSSVHSKRRSRADLTAEMISAPLGDFRHTMHVGRAGDAFGDTSFLNSKAGEPDGESLDEQPSSSSSKRSLLSRKFRGSKRSQSVTRGEREQRDMLGSLRDSALFVKNAMSLPQLNEKEAAEKGTSKLPKSLSSSPVKKANDGEGGDEEAGTEEAVPRRNGAAGPHSPDPLLDEQAFGDLTDLPVVPKATYGLKHAESIMSFHIDLGPSMLGDVLSIMDKEEWDPEEGEGGYHGDEGAAGTITQAPPYAVAAPPLARQEGKAGPDLPSLPSHALEDEGWAAAAPSPGSARSMGSHTTRDSSSLSSCTSGILEERSPAFRGPDRARAAVSRQPDKEFSFMDEEEEDEIRV.

K5 is subject to N6-methyllysine. S18 bears the Phosphoserine mark. Positions 27-41 (ISAPLGDFRHTMHVG) constitute a CRIB domain. A disordered region spans residues 51–102 (SFLNSKAGEPDGESLDEQPSSSSSKRSLLSRKFRGSKRSQSVTRGEREQRDM). Position 64 is a phosphoserine (S64). A compositionally biased stretch (basic residues) spans 78–87 (LLSRKFRGSK). A phosphoserine mark is found at S105, S109, and S118. Disordered stretches follow at residues 122–182 (LNEK…LDEQ) and 257–356 (VAAP…EIRV). Positions 123-132 (NEKEAAEKGT) are enriched in basic and acidic residues. The segment covering 133 to 143 (SKLPKSLSSSP) has biased composition (low complexity). S138, S140, S142, S174, S292, and S295 each carry phosphoserine. The span at 287 to 315 (AAAAPSPGSARSMGSHTTRDSSSLSSCTS) shows a compositional bias: low complexity. Basic and acidic residues predominate over residues 318–344 (LEERSPAFRGPDRARAAVSRQPDKEFS). Over residues 345 to 356 (FMDEEEEDEIRV) the composition is skewed to acidic residues.

The protein belongs to the BORG/CEP family. Interacts with CDC42 and RHOQ, in a GTP-dependent manner. Not detected in any of the adult tissues tested. May be expressed only in fetal or embryonic tissues.

The protein resides in the endomembrane system. It is found in the cytoplasm. The protein localises to the cytoskeleton. Probably involved in the organization of the actin cytoskeleton. May act downstream of CDC42 to induce actin filament assembly leading to cell shape changes. Induces pseudopodia formation, when overexpressed in fibroblasts. This chain is Cdc42 effector protein 4 (CDC42EP4), found in Homo sapiens (Human).